A 64-amino-acid chain; its full sequence is Alpha-conotoxin GI (64 aa).

The signal sequence occupies residues 1–21 (MGMRMMFTVFLLVVLATTVVS). Residues 22 to 49 (FPSERASDGRDDTAKDEGSDMDKLVEKK) constitute a propeptide that is removed on maturation. Intrachain disulfides connect Cys51–Cys56 and Cys52–Cys62. Position 62 is a cysteine amide (Cys62).

Belongs to the conotoxin A superfamily. Not hydroxylated; hydroxylation, on a synthetic hydroxylated GI, improves its folding but impairs its activity against target receptors. As to expression, expressed by the venom duct.

It localises to the secreted. Functionally, alpha-conotoxins act on postsynaptic membranes, they bind to the nicotinic acetylcholine receptors (nAChR) and thus inhibit them. Reversibly inhibits mammalian muscle nAChR (IC(50)=339 nM on adult subtype (alpha-1-beta-1-gamma-delta/CHRNA1-CHRNB1-CHRNG-CHRND) and IC(50)=5.86-995 nM on fetal subtype (alpha-1-beta-1-delta-epsilon/CHRNA1-CHRNB1-CHRND-CHRNE)). The higher affinity site is the alpha/delta site on mouse muscle-derived BC3H-1 receptor, and the other site (alpha/gamma site) on nicotinic receptors from Torpedo californica electric organ. This chain is Alpha-conotoxin GI, found in Conus geographus (Geography cone).